The sequence spans 484 residues: Phosphomevalonate kinase erg8 (484 aa).

The segment at R54–D77 is disordered. A184–A194 contacts ATP.

The protein belongs to the GHMP kinase family. Mevalonate kinase subfamily.

The catalysed reaction is (R)-5-phosphomevalonate + ATP = (R)-5-diphosphomevalonate + ADP. The protein operates within isoprenoid biosynthesis; isopentenyl diphosphate biosynthesis via mevalonate pathway; isopentenyl diphosphate from (R)-mevalonate: step 2/3. Phosphomevalonate kinase; part of the second module of ergosterol biosynthesis pathway that includes the middle steps of the pathway. Erg8 converts 5-phosphomevalonate to 5-diphosphomevalonate. The second module is carried out in the vacuole and involves the formation of farnesyl diphosphate, which is also an important intermediate in the biosynthesis of ubiquinone, dolichol, heme and prenylated proteins. Activity by the mevalonate kinase erg12 (AFUA_4G07780) first converts mevalonate into 5-phosphomevalonate. 5-phosphomevalonate is then further converted to 5-diphosphomevalonate by the phosphomevalonate kinase erg8 (AFUA_5G10680). The diphosphomevalonate decarboxylase mvd1 (AFUA_4G07130) then produces isopentenyl diphosphate. The isopentenyl-diphosphate delta-isomerase idi1 (AFUA_6G11160) then catalyzes the 1,3-allylic rearrangement of the homoallylic substrate isopentenyl (IPP) to its highly electrophilic allylic isomer, dimethylallyl diphosphate (DMAPP). Finally the farnesyl diphosphate synthase erg20 (AFUA_5G02450) catalyzes the sequential condensation of isopentenyl pyrophosphate with dimethylallyl pyrophosphate, and then with the resultant geranylpyrophosphate to the ultimate product farnesyl pyrophosphate. This is Phosphomevalonate kinase erg8 from Aspergillus fumigatus (strain ATCC MYA-4609 / CBS 101355 / FGSC A1100 / Af293) (Neosartorya fumigata).